Consider the following 2176-residue polypeptide: Nonribosomal peptide synthetase sirP (2176 aa).

Residues 16–31 (EGLTGDDHSPESRRDF) show a composition bias toward basic and acidic residues. A disordered region spans residues 16 to 38 (EGLTGDDHSPESRRDFPMSQSSG). The tract at residues 51 to 434 (FERIASQFPE…LGRKDRVVKN (384 aa)) is adenylation 1. The Carrier 1 domain occupies 534-610 (SSPSSNLYVV…RICDTLSATI (77 aa)). The residue at position 571 (S571) is an O-(pantetheine 4'-phosphoryl)serine. The segment at 643–1073 (YMTAIQVNMI…MMNQLEINDL (431 aa)) is condensation 1. Residues 1094 to 1474 (FEEVVDTWPD…GRIDNQVKVR (381 aa)) form an adenylation 2 region. Residues 1570–1646 (PIEGTTERII…DLALAIDKHI (77 aa)) form the Carrier 2 domain. S1606 carries the O-(pantetheine 4'-phosphoryl)serine modification. The segment at 1661–2070 (QNTVLSHLEE…VQLMAAFRYL (410 aa)) is condensation 2. Positions 2106–2176 (QEMIDLVREA…TAELIAGAVE (71 aa)) constitute a Carrier 3 domain. S2140 is modified (O-(pantetheine 4'-phosphoryl)serine).

It belongs to the NRP synthetase family.

Its pathway is mycotoxin biosynthesis. Its function is as follows. Nonribosomal peptide synthetase; part of the gene cluster that mediates the biosynthesis of sirodesmin PL, an epipolythiodioxopiperazine (ETP) characterized by a disulfide bridged cyclic dipeptide and that acts as a phytotoxin which is involved in the blackleg didease of canola. SirD catalyzes the O-prenylation of L-tyrosine (L-Tyr) in the presence of dimethylallyl diphosphate (DMAPP) to yield 4-O-dimethylallyl-L-Tyr, and therefore represents probably the first pathway-specific enzyme in the biosynthesis of sirodesmin PL. 4-O-dimethylallyl-L-Tyr, then undergoes condensation with L-Ser in a reaction catalyzed by the non-ribosomal peptide synthase sirP to form the diketopiperazine (DKP) backbone. Further bishydroxylation of the DKP performed by the cytochrome P450 monooxygenase sirC leads to the production of the intermediate phomamide. This step is essential to form the reactive thiol group required for toxicity of sirodesmin PL. The next steps of sirodesmin biosynthesis are not well understood yet, but some predictions could be made from intermediate compounds identification. Phomamide is converted into phomalizarine via oxidation, probably by sirT. Further oxidation, methylation (by sirM or sirN) and reduction steps convert phomalizarine to deacetyl sirodesmin. Finally, acetyltransferase sirH probably acetylates deacetyl sirodesmin to produce sirodesmin PL. The polypeptide is Nonribosomal peptide synthetase sirP (Leptosphaeria maculans (Blackleg fungus)).